Consider the following 402-residue polypeptide: Enoyl-[acyl-carrier-protein] reductase [NADH] (402 aa).

NAD(+) contacts are provided by residues 48–53, 74–75, 111–112, and 140–141; these read GASSGY, FE, DA, and LA. Position 226 (tyrosine 226) interacts with substrate. Tyrosine 236 acts as the Proton donor in catalysis. NAD(+) contacts are provided by residues lysine 245 and 274 to 276; that span reads VVT.

This sequence belongs to the TER reductase family. In terms of assembly, monomer.

It catalyses the reaction a 2,3-saturated acyl-[ACP] + NAD(+) = a (2E)-enoyl-[ACP] + NADH + H(+). Its pathway is lipid metabolism; fatty acid biosynthesis. In terms of biological role, involved in the final reduction of the elongation cycle of fatty acid synthesis (FAS II). Catalyzes the reduction of a carbon-carbon double bond in an enoyl moiety that is covalently linked to an acyl carrier protein (ACP). In Xanthomonas campestris pv. campestris (strain 8004), this protein is Enoyl-[acyl-carrier-protein] reductase [NADH].